The sequence spans 546 residues: NAD(P)H-quinone oxidoreductase chain 4 (546 aa).

Transmembrane regions (helical) follow at residues 24–44 (FPWLSVSILFPIGCAFLIPFF), 56–76 (FALSVALITFLVTVGSYINGF), 108–128 (MPLILLTSFITALAVLAAWPV), 132–152 (PKLFFFLILIMDGGQIAVFAV), 156–176 (LLFFLSWELELLPVYLLLAIW), 188–208 (FIIYTAGSSIFILLAALAMGF), 232–252 (ILCYIGLLIAFGVKLPIVPLH), 263–283 (TAPVHMLLAGILLKMGGYALL), 297–317 (FSPLLIVLGVVNIIYAALTSF), 326–346 (IAYSSISHMGFVLIGIGSFSS), 352–372 (AMLQMVSHGLIGASLFFLVGA), 396–416 (FALWTACSLASLALPGMSGFV), 437–457 (VIMASLAAIGVILTPIYLLSM), and 484–504 (IYIIACLLLPIIGIGLYPRLV).

It belongs to the complex I subunit 4 family.

The protein localises to the cellular thylakoid membrane. The catalysed reaction is a plastoquinone + NADH + (n+1) H(+)(in) = a plastoquinol + NAD(+) + n H(+)(out). The enzyme catalyses a plastoquinone + NADPH + (n+1) H(+)(in) = a plastoquinol + NADP(+) + n H(+)(out). In terms of biological role, NDH-1 shuttles electrons from NAD(P)H, via FMN and iron-sulfur (Fe-S) centers, to quinones in the respiratory chain. The immediate electron acceptor for the enzyme in this species is believed to be plastoquinone. Couples the redox reaction to proton translocation (for every two electrons transferred, four hydrogen ions are translocated across the cytoplasmic membrane), and thus conserves the redox energy in a proton gradient. The protein is NAD(P)H-quinone oxidoreductase chain 4 of Prochlorococcus marinus subsp. pastoris (strain CCMP1986 / NIES-2087 / MED4).